The primary structure comprises 224 residues: Small ribosomal subunit protein uS3 (224 aa).

The region spanning 39 to 107 is the KH type-2 domain; sequence IREFLKKKPS…DVWVEIAEVK (69 aa).

This sequence belongs to the universal ribosomal protein uS3 family. As to quaternary structure, part of the 30S ribosomal subunit. Forms a tight complex with proteins S10 and S14.

Its function is as follows. Binds the lower part of the 30S subunit head. Binds mRNA in the 70S ribosome, positioning it for translation. The polypeptide is Small ribosomal subunit protein uS3 (Chlamydia muridarum (strain MoPn / Nigg)).